Here is a 494-residue protein sequence, read N- to C-terminus: tRNA-2-methylthio-N(6)-dimethylallyladenosine synthase (494 aa).

Residues 12–131 (PTYRVVTYGC…LPVLLKRARH (120 aa)) enclose the MTTase N-terminal domain. [4Fe-4S] cluster-binding residues include C21, C60, C94, C168, C172, and C175. The Radical SAM core domain occupies 154–385 (RDSAYSAWVS…ELVDDIAWQE (232 aa)). One can recognise a TRAM domain in the interval 387–457 (KAQVGRAVEV…PHHLVADGGL (71 aa)).

It belongs to the methylthiotransferase family. MiaB subfamily. In terms of assembly, monomer. The cofactor is [4Fe-4S] cluster.

The protein resides in the cytoplasm. It catalyses the reaction N(6)-dimethylallyladenosine(37) in tRNA + (sulfur carrier)-SH + AH2 + 2 S-adenosyl-L-methionine = 2-methylsulfanyl-N(6)-dimethylallyladenosine(37) in tRNA + (sulfur carrier)-H + 5'-deoxyadenosine + L-methionine + A + S-adenosyl-L-homocysteine + 2 H(+). Functionally, catalyzes the methylthiolation of N6-(dimethylallyl)adenosine (i(6)A), leading to the formation of 2-methylthio-N6-(dimethylallyl)adenosine (ms(2)i(6)A) at position 37 in tRNAs that read codons beginning with uridine. The protein is tRNA-2-methylthio-N(6)-dimethylallyladenosine synthase of Cutibacterium acnes (strain DSM 16379 / KPA171202) (Propionibacterium acnes).